A 189-amino-acid chain; its full sequence is Ribosome maturation factor RimM (189 aa).

The 74-residue stretch at 96–169 (EDEFFQTDLI…TLLVEPYAAG (74 aa)) folds into the PRC barrel domain. A disordered region spans residues 170–189 (LIADDEDERPQNEKKKPKKS).

The protein belongs to the RimM family. As to quaternary structure, binds ribosomal protein uS19.

The protein resides in the cytoplasm. Its function is as follows. An accessory protein needed during the final step in the assembly of 30S ribosomal subunit, possibly for assembly of the head region. Essential for efficient processing of 16S rRNA. May be needed both before and after RbfA during the maturation of 16S rRNA. It has affinity for free ribosomal 30S subunits but not for 70S ribosomes. The polypeptide is Ribosome maturation factor RimM (Brucella anthropi (strain ATCC 49188 / DSM 6882 / CCUG 24695 / JCM 21032 / LMG 3331 / NBRC 15819 / NCTC 12168 / Alc 37) (Ochrobactrum anthropi)).